Reading from the N-terminus, the 292-residue chain is Imipenem-hydrolyzing beta-lactamase (292 aa).

A signal peptide spans Met1–Ala27. An intrachain disulfide couples Cys70 to Cys240. The active-site Acyl-ester intermediate is the Ser71. Lys236–Gly238 contributes to the substrate binding site.

It belongs to the class-A beta-lactamase family.

It catalyses the reaction a beta-lactam + H2O = a substituted beta-amino acid. Its function is as follows. Hydrolyzes carbapenems such as imipenem, which are extended-spectrum beta-lactam antibiotics. This Enterobacter cloacae protein is Imipenem-hydrolyzing beta-lactamase (nmcA).